Here is a 308-residue protein sequence, read N- to C-terminus: Putative cathepsin L 3 (308 aa).

An N-terminal signal peptide occupies residues 1-21; the sequence is MKQFLTAAIVTLLMTAGYYHL. Residues 22–110 constitute a propeptide, activation peptide; it reads QEDDTNDFER…GASLPEVQLE (89 aa). 2 disulfides stabilise this stretch: C129-C170 and C254-C298. Residues H261 and N278 contribute to the active site.

This sequence belongs to the peptidase C1 family.

Its subcellular location is the secreted. The catalysed reaction is Specificity close to that of papain. As compared to cathepsin B, cathepsin L exhibits higher activity toward protein substrates, but has little activity on Z-Arg-Arg-NHMec, and no peptidyl-dipeptidase activity.. Functionally, may be involved in extracellular digestion. This chain is Putative cathepsin L 3, found in Paramecium tetraurelia.